The primary structure comprises 1407 residues: DNA-directed RNA polymerase subunit beta' (1407 aa).

Residues Cys70, Cys72, Cys85, and Cys88 each contribute to the Zn(2+) site. The Mg(2+) site is built by Asp460, Asp462, and Asp464. Residues Cys814, Cys888, Cys895, and Cys898 each contribute to the Zn(2+) site.

The protein belongs to the RNA polymerase beta' chain family. In terms of assembly, the RNAP catalytic core consists of 2 alpha, 1 beta, 1 beta' and 1 omega subunit. When a sigma factor is associated with the core the holoenzyme is formed, which can initiate transcription. It depends on Mg(2+) as a cofactor. The cofactor is Zn(2+).

The enzyme catalyses RNA(n) + a ribonucleoside 5'-triphosphate = RNA(n+1) + diphosphate. DNA-dependent RNA polymerase catalyzes the transcription of DNA into RNA using the four ribonucleoside triphosphates as substrates. The polypeptide is DNA-directed RNA polymerase subunit beta' (Citrobacter koseri (strain ATCC BAA-895 / CDC 4225-83 / SGSC4696)).